We begin with the raw amino-acid sequence, 149 residues long: Transcription antitermination protein NusB (149 aa).

The protein belongs to the NusB family.

Involved in transcription antitermination. Required for transcription of ribosomal RNA (rRNA) genes. Binds specifically to the boxA antiterminator sequence of the ribosomal RNA (rrn) operons. This is Transcription antitermination protein NusB from Sphingopyxis alaskensis (strain DSM 13593 / LMG 18877 / RB2256) (Sphingomonas alaskensis).